The sequence spans 60 residues: Mastoparan-VT4 (60 aa).

The signal sequence occupies residues 1–27 (MKNPILILFTAFIALLGFFGMSAEALA). AXPX repeat units lie at residues 27 to 30 (ADPK), 31 to 34 (ADPL), 35 to 38 (AGPN), and 41 to 44 (ADPE). Residues 28–45 (DPKADPLAGPNPDADPEA) constitute a propeptide that is removed on maturation. Leucine 59 is modified (leucine amide).

Belongs to the MCD family. Mastoparan subfamily. Expressed by the venom gland.

It is found in the secreted. The synthetic peptide shows antimicrobial activities against Gram-negative bacteria (but not against all strains tested), Gram-positive bacteria (not all strains tested) and the fungi C.albicans and C.parapsilosis. Exhibits little hemolytic activity against washed human erythrocytes. The protein is Mastoparan-VT4 of Vespa tropica (Greater banded hornet).